The sequence spans 535 residues: D-2-hydroxyglutarate dehydrogenase, mitochondrial (535 aa).

A mitochondrion-targeting transit peptide spans 1 to 50 (MVLHLVPRWSASLFRASPRWKKTYSQRASAQLKWLGCPRSVYSPLACRAY). The 180-residue stretch at 110–289 (VRGCSKVLLR…TAVSIVCPPR (180 aa)) folds into the FAD-binding PCMH-type domain. K115 bears the N6-succinyllysine mark. R400, T404, and K415 together coordinate (R)-2-hydroxyglutarate. A (R)-lactate-binding site is contributed by R400. (R)-malate is bound by residues R400, T404, and K415. Zn(2+)-binding residues include H448 and H455. N457 provides a ligand contact to (R)-2-hydroxyglutarate. E489 lines the Zn(2+) pocket. A (R)-2-hydroxyglutarate-binding site is contributed by H490. H490 serves as a coordination point for (R)-lactate. H490 serves as a coordination point for (R)-malate.

This sequence belongs to the FAD-binding oxidoreductase/transferase type 4 family. FAD is required as a cofactor.

Its subcellular location is the mitochondrion. It catalyses the reaction (R)-2-hydroxyglutarate + A = 2-oxoglutarate + AH2. It carries out the reaction (R)-malate + A = oxaloacetate + AH2. Activated by zinc, cobalt and manganese ions. Inhibited by EDTA. In terms of biological role, catalyzes the oxidation of D-2-hydroxyglutarate (D-2-HG) to alpha-ketoglutarate. Also catalyzes the oxidation of other D-2-hydroxyacids, such as D-malate (D-MAL) and D-lactate (D-LAC). Exhibits high activities towards D-2-HG and D-MAL but a very weak activity towards D-LAC. This Rattus norvegicus (Rat) protein is D-2-hydroxyglutarate dehydrogenase, mitochondrial.